A 95-amino-acid polypeptide reads, in one-letter code: Virion membrane protein OPG135 (95 aa).

The N-terminal stretch at 1–22 (MSCYTAILKSVGGLALFQDANG) is a signal peptide. The Intravirion portion of the chain corresponds to 23-45 (AIDLCRHFFMYFCEQKLRPNSFW). Residues 46 to 66 (FVVVRAIASMIMYLVLGIALL) traverse the membrane as a helical segment. Over 67-83 (YISEQDDKKNTNNASNS) the chain is Virion surface. Positions 76-95 (NTNNASNSNKLNESSINSNS) are disordered. The span at 77-95 (TNNASNSNKLNESSINSNS) shows a compositional bias: low complexity. N-linked (GlcNAc...) asparagine; by host glycans are attached at residues asparagine 79 and asparagine 87.

The protein belongs to the oerthopoxvirus OPG135 family.

The protein localises to the virion membrane. It is found in the host cytoplasm. Its function is as follows. Envelope protein. Required for an early step in virion morphogenesis. This chain is Virion membrane protein OPG135 (OPG135), found in Homo sapiens (Human).